We begin with the raw amino-acid sequence, 742 residues long: Phosphoribosylformylglycinamidine synthase subunit PurL (742 aa).

H54 is an active-site residue. Y57 and K96 together coordinate ATP. A Mg(2+)-binding site is contributed by E98. Residues 99 to 102 (SHNH) and R121 contribute to the substrate site. H100 serves as the catalytic Proton acceptor. D122 is a binding site for Mg(2+). Q245 provides a ligand contact to substrate. D273 contacts Mg(2+). Residue 317 to 319 (ESQ) participates in substrate binding. Residues D500 and G537 each coordinate ATP. N538 lines the Mg(2+) pocket. S540 provides a ligand contact to substrate.

It belongs to the FGAMS family. In terms of assembly, monomer. Part of the FGAM synthase complex composed of 1 PurL, 1 PurQ and 2 PurS subunits.

It localises to the cytoplasm. It catalyses the reaction N(2)-formyl-N(1)-(5-phospho-beta-D-ribosyl)glycinamide + L-glutamine + ATP + H2O = 2-formamido-N(1)-(5-O-phospho-beta-D-ribosyl)acetamidine + L-glutamate + ADP + phosphate + H(+). Its pathway is purine metabolism; IMP biosynthesis via de novo pathway; 5-amino-1-(5-phospho-D-ribosyl)imidazole from N(2)-formyl-N(1)-(5-phospho-D-ribosyl)glycinamide: step 1/2. Part of the phosphoribosylformylglycinamidine synthase complex involved in the purines biosynthetic pathway. Catalyzes the ATP-dependent conversion of formylglycinamide ribonucleotide (FGAR) and glutamine to yield formylglycinamidine ribonucleotide (FGAM) and glutamate. The FGAM synthase complex is composed of three subunits. PurQ produces an ammonia molecule by converting glutamine to glutamate. PurL transfers the ammonia molecule to FGAR to form FGAM in an ATP-dependent manner. PurS interacts with PurQ and PurL and is thought to assist in the transfer of the ammonia molecule from PurQ to PurL. The protein is Phosphoribosylformylglycinamidine synthase subunit PurL of Geobacillus sp. (strain WCH70).